The sequence spans 194 residues: HTH-type transcriptional regulator BetI (194 aa).

The region spanning 8–68 is the HTH tetR-type domain; that stretch reads EIRRAQLIDA…ATMRHVLRDL (61 aa). Residues 31–50 constitute a DNA-binding region (H-T-H motif); sequence TLASVAQRANISTGIVSHYF.

The protein operates within amine and polyamine biosynthesis; betaine biosynthesis via choline pathway [regulation]. Its function is as follows. Repressor involved in the biosynthesis of the osmoprotectant glycine betaine. It represses transcription of the choline transporter BetT and the genes of BetAB involved in the synthesis of glycine betaine. This is HTH-type transcriptional regulator BetI from Burkholderia lata (strain ATCC 17760 / DSM 23089 / LMG 22485 / NCIMB 9086 / R18194 / 383).